A 504-amino-acid polypeptide reads, in one-letter code: Maturase K (504 aa).

This sequence belongs to the intron maturase 2 family. MatK subfamily.

It is found in the plastid. Its subcellular location is the chloroplast. In terms of biological role, usually encoded in the trnK tRNA gene intron. Probably assists in splicing its own and other chloroplast group II introns. This Eichhornia crassipes (Water hyacinth) protein is Maturase K.